A 288-amino-acid polypeptide reads, in one-letter code: MDITFDHVSFTYQAGTPFAGDGIKDVSGVIRDGSYTAIIGHTGSGKSTILQHLNALLKPTSGTVTIGDKVITNETNNKNLKPLRQKVGMVFQFAENQLFEQTVAKDIAFGPQNFGVSEKDALALADKMVKMVGLPHDVLEKSPFDLSGGQMRRVAIAGVLAMQPEVLVLDEPTAGLDPSGRHEMMQMFEQLHREQGQTIVLVTHQMDDVADYADTVWVMAEGKLIKTGTPREIFADPAWLKANQLGLPKTAQLAQQLAAKGFHFDPQPLTESELADQLVPQIGGGQRG.

The ABC transporter domain occupies 3–246 (ITFDHVSFTY…PAWLKANQLG (244 aa)). An ATP-binding site is contributed by 40-47 (GHTGSGKS). Glutamate 171 functions as the Proton acceptor in the catalytic mechanism.

The protein belongs to the ABC transporter superfamily. Energy-coupling factor EcfA family. Forms a stable energy-coupling factor (ECF) transporter complex probably composed of 2 membrane-embedded substrate-binding proteins (S component), 2 ATP-binding proteins (A component) and 2 transmembrane proteins (T component). This complex interacts with a number of substrate-specific components, including FolT and ThiT for 5-formyltetrahydrofolate and thiamine respectively.

Its subcellular location is the cell membrane. In terms of biological role, ATP-binding (A) component of a common energy-coupling factor (ECF) ABC-transporter complex. Unlike classic ABC transporters this ECF transporter provides the energy necessary to transport a number of different substrates including 5-formyltetrahydrofolate and thiamine. Expression of the complex plus FolT or ThiT in Lactococcus lactis subsp. cremoris (strain NZ9000) allows 5-formyltetrahydrofolate or thiamine uptake respectively; 5-formyltetrahydrofolate or thiamine are not taken up in the absence of FolT/ThiT or the EcfA1A2T complex. Deenergized L.lactis subsp. cremoris (treated with 2-deoxyglucose) do not take up substrate. The polypeptide is Energy-coupling factor transporter ATP-binding protein EcfA2 (Lacticaseibacillus paracasei (strain ATCC 334 / BCRC 17002 / CCUG 31169 / CIP 107868 / KCTC 3260 / NRRL B-441) (Lactobacillus paracasei)).